The following is a 283-amino-acid chain: Tryptophan 2,3-dioxygenase (283 aa).

Substrate is bound by residues 52-56, Y114, and R118; that span reads FIIQH. H241 contributes to the heme binding site. A substrate-binding site is contributed by T255.

Belongs to the tryptophan 2,3-dioxygenase family. In terms of assembly, homotetramer. Heme is required as a cofactor.

The catalysed reaction is L-tryptophan + O2 = N-formyl-L-kynurenine. It participates in amino-acid degradation; L-tryptophan degradation via kynurenine pathway; L-kynurenine from L-tryptophan: step 1/2. Functionally, heme-dependent dioxygenase that catalyzes the oxidative cleavage of the L-tryptophan (L-Trp) pyrrole ring and converts L-tryptophan to N-formyl-L-kynurenine. Catalyzes the oxidative cleavage of the indole moiety. In Pseudomonas fluorescens (strain ATCC BAA-477 / NRRL B-23932 / Pf-5), this protein is Tryptophan 2,3-dioxygenase.